The following is a 318-amino-acid chain: Ribose-phosphate pyrophosphokinase (318 aa).

ATP-binding positions include 46 to 48 (DGE) and 105 to 106 (RQ). Mg(2+) contacts are provided by His139 and Asp178. Lys201 is an active-site residue. D-ribose 5-phosphate contacts are provided by residues Arg203, Asp227, and 231-235 (DTAGT).

It belongs to the ribose-phosphate pyrophosphokinase family. Class I subfamily. Homohexamer. It depends on Mg(2+) as a cofactor.

Its subcellular location is the cytoplasm. The catalysed reaction is D-ribose 5-phosphate + ATP = 5-phospho-alpha-D-ribose 1-diphosphate + AMP + H(+). The protein operates within metabolic intermediate biosynthesis; 5-phospho-alpha-D-ribose 1-diphosphate biosynthesis; 5-phospho-alpha-D-ribose 1-diphosphate from D-ribose 5-phosphate (route I): step 1/1. In terms of biological role, involved in the biosynthesis of the central metabolite phospho-alpha-D-ribosyl-1-pyrophosphate (PRPP) via the transfer of pyrophosphoryl group from ATP to 1-hydroxyl of ribose-5-phosphate (Rib-5-P). The protein is Ribose-phosphate pyrophosphokinase of Helicobacter pylori (strain J99 / ATCC 700824) (Campylobacter pylori J99).